A 77-amino-acid polypeptide reads, in one-letter code: Translation initiation factor IF-1, chloroplastic (77 aa).

The region spanning 1-71 (MKEQKWIHEG…TRGRIIYRLR (71 aa)) is the S1-like domain.

Belongs to the IF-1 family. In terms of assembly, component of the 30S ribosomal translation pre-initiation complex which assembles on the 30S ribosome in the order IF-2 and IF-3, IF-1 and N-formylmethionyl-tRNA(fMet); mRNA recruitment can occur at any time during PIC assembly.

The protein localises to the plastid. Its subcellular location is the chloroplast. Functionally, one of the essential components for the initiation of protein synthesis. Stabilizes the binding of IF-2 and IF-3 on the 30S subunit to which N-formylmethionyl-tRNA(fMet) subsequently binds. Helps modulate mRNA selection, yielding the 30S pre-initiation complex (PIC). Upon addition of the 50S ribosomal subunit IF-1, IF-2 and IF-3 are released leaving the mature 70S translation initiation complex. This is Translation initiation factor IF-1, chloroplastic from Garrya elliptica (Wavyleaf silktassel).